The chain runs to 337 residues: 3-isopropylmalate dehydrogenase (337 aa).

Residues arginine 86, arginine 96, arginine 117, and aspartate 201 each coordinate substrate. The Mg(2+) site is built by aspartate 201, aspartate 225, and aspartate 229. 258-270 (GAAFDIAGKNIGN) serves as a coordination point for NAD(+).

The protein belongs to the isocitrate and isopropylmalate dehydrogenases family. In terms of assembly, homotetramer. It depends on Mg(2+) as a cofactor. The cofactor is Mn(2+).

The protein localises to the cytoplasm. The enzyme catalyses (2R,3S)-3-isopropylmalate + NAD(+) = 4-methyl-2-oxopentanoate + CO2 + NADH. The protein operates within amino-acid biosynthesis; L-leucine biosynthesis; L-leucine from 3-methyl-2-oxobutanoate: step 3/4. Functionally, catalyzes the oxidation of 3-carboxy-2-hydroxy-4-methylpentanoate (3-isopropylmalate) to 3-carboxy-4-methyl-2-oxopentanoate. The product decarboxylates to 4-methyl-2 oxopentanoate. This Sulfurisphaera tokodaii (strain DSM 16993 / JCM 10545 / NBRC 100140 / 7) (Sulfolobus tokodaii) protein is 3-isopropylmalate dehydrogenase (leuB).